The chain runs to 287 residues: Light-independent protochlorophyllide reductase iron-sulfur ATP-binding protein (287 aa).

ATP-binding positions include 10–15 and K39; that span reads GIGKST. S14 contacts Mg(2+). [4Fe-4S] cluster is bound by residues C95 and C129. 180 to 181 contributes to the ATP binding site; it reads NR.

This sequence belongs to the NifH/BchL/ChlL family. In terms of assembly, homodimer. Protochlorophyllide reductase is composed of three subunits; ChlL, ChlN and ChlB. [4Fe-4S] cluster serves as cofactor.

The protein resides in the plastid. The protein localises to the chloroplast. It catalyses the reaction chlorophyllide a + oxidized 2[4Fe-4S]-[ferredoxin] + 2 ADP + 2 phosphate = protochlorophyllide a + reduced 2[4Fe-4S]-[ferredoxin] + 2 ATP + 2 H2O. The protein operates within porphyrin-containing compound metabolism; chlorophyll biosynthesis (light-independent). Functionally, component of the dark-operative protochlorophyllide reductase (DPOR) that uses Mg-ATP and reduced ferredoxin to reduce ring D of protochlorophyllide (Pchlide) to form chlorophyllide a (Chlide). This reaction is light-independent. The L component serves as a unique electron donor to the NB-component of the complex, and binds Mg-ATP. The chain is Light-independent protochlorophyllide reductase iron-sulfur ATP-binding protein from Nephroselmis olivacea (Green alga).